Consider the following 914-residue polypeptide: Thyroid peroxidase (914 aa).

Positions 1 to 31 (MRTLGAMAVMLVVMGTAIFLPFLLRSRDILG) are cleaved as a signal peptide. Residues 32 to 834 (GKTMTSHVIS…TCIDSGRLPR (803 aa)) are Extracellular-facing. N-linked (GlcNAc...) asparagine glycosylation is present at asparagine 123. The cysteines at positions 136 and 152 are disulfide-linked. Residue aspartate 232 coordinates heme b. Histidine 233 (proton acceptor) is an active-site residue. Aspartate 234 is a Ca(2+) binding site. Disulfide bonds link cysteine 253-cysteine 263 and cysteine 257-cysteine 278. N-linked (GlcNAc...) asparagine glycans are attached at residues asparagine 271 and asparagine 299. Threonine 313, phenylalanine 315, aspartate 317, and serine 319 together coordinate Ca(2+). Asparagine 334 carries N-linked (GlcNAc...) asparagine glycosylation. The heme b site is built by glutamate 387 and histidine 482. Cystine bridges form between cysteine 586-cysteine 643, cysteine 684-cysteine 709, cysteine 730-cysteine 770, cysteine 756-cysteine 782, cysteine 788-cysteine 802, cysteine 796-cysteine 811, and cysteine 813-cysteine 826. N-linked (GlcNAc...) asparagine glycosylation occurs at asparagine 603. Positions 728–783 (DKCVFPEKVDNGNFVHCEESGKLVLVYSCFHGYKLQGQEQVTCTQNGWDSEPPVCK) constitute a Sushi domain. The 44-residue stretch at 784–827 (DVNECADLTHPPCHSSAKCKNTKGSFQCVCTDPYMLGEDEKTCI) folds into the EGF-like; calcium-binding domain. Residues 835-859 (ASWVSIALGALLIGGLASLSWTVIC) traverse the membrane as a helical segment. At 860–914 (RWTHADKKSTLLITERVTMESGFRKSQESGISPQKAEVQDAEQEPAYGSRVLLCE) the chain is on the cytoplasmic side. The interval 882–907 (FRKSQESGISPQKAEVQDAEQEPAYG) is disordered.

The protein belongs to the peroxidase family. XPO subfamily. As to quaternary structure, interacts with DUOX1, DUOX2 and CYBA. Ca(2+) serves as cofactor. The cofactor is heme b. In terms of processing, heme is covalently bound through a H(2)O(2)-dependent autocatalytic process. Heme insertion is important for the delivery of protein at the cell surface. Post-translationally, cleaved in its N-terminal part.

It localises to the membrane. It carries out the reaction 2 iodide + H2O2 + 2 H(+) = diiodine + 2 H2O. The enzyme catalyses [thyroglobulin]-L-tyrosine + iodide + H2O2 + H(+) = [thyroglobulin]-3-iodo-L-tyrosine + 2 H2O. It catalyses the reaction [thyroglobulin]-3-iodo-L-tyrosine + iodide + H2O2 + H(+) = [thyroglobulin]-3,5-diiodo-L-tyrosine + 2 H2O. The catalysed reaction is 2 [thyroglobulin]-3,5-diiodo-L-tyrosine + H2O2 = [thyroglobulin]-L-thyroxine + [thyroglobulin]-dehydroalanine + 2 H2O. It carries out the reaction [thyroglobulin]-3-iodo-L-tyrosine + [thyroglobulin]-3,5-diiodo-L-tyrosine + H2O2 = [thyroglobulin]-3,3',5-triiodo-L-thyronine + [thyroglobulin]-dehydroalanine + 2 H2O. It functions in the pathway hormone biosynthesis; thyroid hormone biosynthesis. Iodination and coupling of the hormonogenic tyrosines in thyroglobulin to yield the thyroid hormones T(3) and T(4). In Rattus norvegicus (Rat), this protein is Thyroid peroxidase (Tpo).